The sequence spans 214 residues: Adenylate kinase (214 aa).

14–19 (GSGKGT) contacts ATP. The NMP stretch occupies residues 34 to 63 (SSGDLFRSAIKSATPLGSKAAEYINKGLLV). AMP contacts are provided by residues serine 35, arginine 40, 61-63 (LLV), 89-92 (GFPR), and glutamine 96. Residues 130–163 (SRFICPACNYVYNQSQGFKECPTCHVALIRRSDD) form an LID region. Arginine 131 contacts ATP. Zn(2+) contacts are provided by cysteine 134 and cysteine 137. An ATP-binding site is contributed by 140–141 (VY). Zn(2+) contacts are provided by cysteine 150 and cysteine 153. Residues arginine 160 and arginine 171 each coordinate AMP. Residue threonine 199 participates in ATP binding.

The protein belongs to the adenylate kinase family. In terms of assembly, monomer.

The protein resides in the cytoplasm. The enzyme catalyses AMP + ATP = 2 ADP. The protein operates within purine metabolism; AMP biosynthesis via salvage pathway; AMP from ADP: step 1/1. Functionally, catalyzes the reversible transfer of the terminal phosphate group between ATP and AMP. Plays an important role in cellular energy homeostasis and in adenine nucleotide metabolism. The sequence is that of Adenylate kinase from Chlamydia caviae (strain ATCC VR-813 / DSM 19441 / 03DC25 / GPIC) (Chlamydophila caviae).